Reading from the N-terminus, the 362-residue chain is Adenosine deaminase (362 aa).

Zn(2+) contacts are provided by H19 and H21. Substrate-binding residues include H21, D23, and G181. H208 provides a ligand contact to Zn(2+). E211 functions as the Proton donor in the catalytic mechanism. D300 contacts Zn(2+).

Belongs to the metallo-dependent hydrolases superfamily. Adenosine and AMP deaminases family. Adenosine deaminase subfamily. Requires Zn(2+) as cofactor.

It carries out the reaction adenosine + H2O + H(+) = inosine + NH4(+). The enzyme catalyses 2'-deoxyadenosine + H2O + H(+) = 2'-deoxyinosine + NH4(+). In terms of biological role, catalyzes the hydrolytic deamination of adenosine and 2-deoxyadenosine. This chain is Adenosine deaminase, found in Mycolicibacterium gilvum (strain PYR-GCK) (Mycobacterium gilvum (strain PYR-GCK)).